The sequence spans 439 residues: Protein translocase subunit SecY (439 aa).

The next 10 membrane-spanning stretches (helical) occupy residues 28–48, 73–93, 127–147, 156–176, 179–199, 220–240, 276–296, 318–338, 375–395, and 401–421; these read ILIT…PVPG, IFSG…LPYI, LTRY…AVWV, PLFT…VMWI, LITE…NIVA, VGGI…IVFV, GVMP…LANF, IYAL…SSLI, LTIL…AVEG, and TFQG…IDTA.

It belongs to the SecY/SEC61-alpha family. Component of the Sec protein translocase complex. Heterotrimer consisting of SecY, SecE and SecG subunits. The heterotrimers can form oligomers, although 1 heterotrimer is thought to be able to translocate proteins. Interacts with the ribosome. Interacts with SecDF, and other proteins may be involved. Interacts with SecA.

It is found in the cell inner membrane. The protein localises to the cellular thylakoid membrane. In terms of biological role, the central subunit of the protein translocation channel SecYEG. Consists of two halves formed by TMs 1-5 and 6-10. These two domains form a lateral gate at the front which open onto the bilayer between TMs 2 and 7, and are clamped together by SecE at the back. The channel is closed by both a pore ring composed of hydrophobic SecY resides and a short helix (helix 2A) on the extracellular side of the membrane which forms a plug. The plug probably moves laterally to allow the channel to open. The ring and the pore may move independently. The polypeptide is Protein translocase subunit SecY (Synechococcus elongatus (strain ATCC 33912 / PCC 7942 / FACHB-805) (Anacystis nidulans R2)).